Consider the following 361-residue polypeptide: Ribosomal RNA large subunit methyltransferase M (361 aa).

S-adenosyl-L-methionine contacts are provided by residues S190, 223 to 226 (CPGG), D242, D262, and D280. K309 (proton acceptor) is an active-site residue.

The protein belongs to the class I-like SAM-binding methyltransferase superfamily. RNA methyltransferase RlmE family. RlmM subfamily. Monomer.

It is found in the cytoplasm. It carries out the reaction cytidine(2498) in 23S rRNA + S-adenosyl-L-methionine = 2'-O-methylcytidine(2498) in 23S rRNA + S-adenosyl-L-homocysteine + H(+). Catalyzes the 2'-O-methylation at nucleotide C2498 in 23S rRNA. This chain is Ribosomal RNA large subunit methyltransferase M, found in Actinobacillus pleuropneumoniae serotype 7 (strain AP76).